The primary structure comprises 389 residues: Chaperone protein DnaJ (389 aa).

The J domain maps to 6-70 (DYYEVLGLAK…QKKAAYDQYG (65 aa)). The CR-type zinc finger occupies 142 to 224 (GVEKEIKYNR…CHGTGHEKKA (83 aa)). Zn(2+) is bound by residues cysteine 155, cysteine 158, cysteine 172, cysteine 175, cysteine 198, cysteine 201, cysteine 212, and cysteine 215. 4 CXXCXGXG motif repeats span residues 155–162 (CATCGGNG), 172–179 (CHKCHGSG), 198–205 (CDVCHGTG), and 212–219 (CPTCHGTG).

The protein belongs to the DnaJ family. Homodimer. The cofactor is Zn(2+).

The protein resides in the cytoplasm. Participates actively in the response to hyperosmotic and heat shock by preventing the aggregation of stress-denatured proteins and by disaggregating proteins, also in an autonomous, DnaK-independent fashion. Unfolded proteins bind initially to DnaJ; upon interaction with the DnaJ-bound protein, DnaK hydrolyzes its bound ATP, resulting in the formation of a stable complex. GrpE releases ADP from DnaK; ATP binding to DnaK triggers the release of the substrate protein, thus completing the reaction cycle. Several rounds of ATP-dependent interactions between DnaJ, DnaK and GrpE are required for fully efficient folding. Also involved, together with DnaK and GrpE, in the DNA replication of plasmids through activation of initiation proteins. The chain is Chaperone protein DnaJ from Enterococcus faecalis (strain ATCC 700802 / V583).